Reading from the N-terminus, the 338-residue chain is DNA fragmentation factor subunit beta (338 aa).

The CIDE-N domain occupies 4–80; it reads KPKSVKLRAL…LLTLGQAWQG (77 aa).

As to quaternary structure, heterodimer of DFFA and DFFB. Interacts with H1-1.

The protein resides in the cytoplasm. It localises to the nucleus. With respect to regulation, inhibited by DFFA (DFF45). Functionally, nuclease that induces DNA fragmentation and chromatin condensation during apoptosis. Degrades naked DNA and induces apoptotic morphology. The sequence is that of DNA fragmentation factor subunit beta (DFFB) from Homo sapiens (Human).